The chain runs to 128 residues: 3-aminoacrylate deaminase RutC (128 aa).

The protein belongs to the RutC family. In terms of assembly, homotrimer.

The catalysed reaction is (Z)-3-aminoacrylate + H2O + H(+) = 3-oxopropanoate + NH4(+). Functionally, involved in pyrimidine catabolism. Catalyzes the deamination of 3-aminoacrylate to malonic semialdehyde, a reaction that can also occur spontaneously. RutC may facilitate the reaction and modulate the metabolic fitness, rather than catalyzing essential functions. This chain is 3-aminoacrylate deaminase RutC, found in Escherichia coli O103:H2 (strain 12009 / EHEC).